A 369-amino-acid polypeptide reads, in one-letter code: Ubiquitin carboxyl-terminal hydrolase 12 (369 aa).

The Required for plasma membrane localization of USP12/WDR20 motif lies at Met-1–Leu-4. The region spanning Phe-39–Arg-368 is the USP domain. Catalysis depends on Cys-48, which acts as the Nucleophile. The interval Lys-145–Thr-165 is disordered. Zn(2+)-binding residues include Cys-185, Cys-188, Cys-232, and Cys-235. The active-site Proton acceptor is His-316.

The protein belongs to the peptidase C19 family. USP12/USP46 subfamily. In terms of assembly, interacts with WDR48. Interacts with WDR20; this interaction promotes translocation of the USP12 complex to the plasma membrane. Component of the USP12/WDR20/WDR48 deubiquitinating complex. Component of the USP12/WDR20/WDR48 deubiquitinating complex. Interacts with PHLPP1. Interacts with RBPJ. Interacts with CBP; this interaction blocks the acetyltransferase activity of CREBBP.

Its subcellular location is the nucleus. It localises to the cytoplasm. It is found in the cell membrane. It catalyses the reaction Thiol-dependent hydrolysis of ester, thioester, amide, peptide and isopeptide bonds formed by the C-terminal Gly of ubiquitin (a 76-residue protein attached to proteins as an intracellular targeting signal).. With respect to regulation, activated by interaction with WDR20, WDR48 and DMWD through different allosteric mechanisms. Deubiquitinating enzyme that plays various roles in the regulation of the immune response and inflammation. During TCR engagement and activation, translocates into the cytoplasm and deubiquitinates its substrates LAT and TRAT1 and prevents their lysosome-dependent degradation to stabilize the TCR signaling complex at the plasma membrane. Plays an essential role in the selective LPS-induced macrophage response through the activation of NF-kappa-B pathway. In addition, promotes that antiviral immune response through targeting DNA sensor IFI16 to inhibit its proteasome-dependent degradation. Participates in the interferon signaling pathway and antiviral response independently of its deubiquitinase activity by maintaining nuclear phosphorylated STAT1 levels via inhibition of its CREBBP-mediated acetylation and subsequent dephosphorylation. Plays an intrinsic role in promoting the differentiation, activation and proliferation of CD4(+) T-cell by activating the NF-kappa-B signaling pathway through deubiquitinating and stabilizing B-cell lymphoma/leukemia 10/BCL10. In myeloid-derived suppressor cells promotes the activation of the NF-kappa-B via deubiquitination and stabilization of RELA. Regulates the 'Lys-63'-linked polyubiquitin chains of BAX and thereby modulates the mitochondrial apoptotic process. Negative regulator of NOTCH signaling that specifically deubiquitinates non-activated NOTCH receptors to target them for lysosomal degradation; deubiquitination of NOTCH stimulates its transport form late endosomes to lysosomes. Protects neurons against HTT/huntingtin-induced polyglutamine expansion-dependent neurodegeneration through regulation of autophagic flux. This function is independent of deubiquitinase activity or of other components of the USP12-WDR20-WDR48 deubiquitinating complex. In complex with WDR48, acts as a potential tumor suppressor by positively regulating PHLPP1 stability. This chain is Ubiquitin carboxyl-terminal hydrolase 12 (USP12), found in Bos taurus (Bovine).